The sequence spans 134 residues: Probable glycine cleavage system H protein (134 aa).

Residues 29–110 (TVLVGITDYA…PYEAWIAKIK (82 aa)) enclose the Lipoyl-binding domain. N6-lipoyllysine is present on Lys70.

Belongs to the GcvH family. As to quaternary structure, the glycine cleavage system is composed of four proteins: P, T, L and H. Requires (R)-lipoate as cofactor.

Its function is as follows. The glycine cleavage system catalyzes the degradation of glycine. The H protein shuttles the methylamine group of glycine from the P protein to the T protein. The polypeptide is Probable glycine cleavage system H protein (Pyrococcus furiosus (strain ATCC 43587 / DSM 3638 / JCM 8422 / Vc1)).